The sequence spans 577 residues: Arginine--tRNA ligase (577 aa).

The short motif at 122-132 (PNVAKEMHVGH) is the 'HIGH' region element.

Belongs to the class-I aminoacyl-tRNA synthetase family. In terms of assembly, monomer.

The protein localises to the cytoplasm. It catalyses the reaction tRNA(Arg) + L-arginine + ATP = L-arginyl-tRNA(Arg) + AMP + diphosphate. The protein is Arginine--tRNA ligase of Enterobacter sp. (strain 638).